The sequence spans 237 residues: Demethylmenaquinone methyltransferase (237 aa).

Residues threonine 58, aspartate 79, and 106-107 (NA) each bind S-adenosyl-L-methionine.

It belongs to the class I-like SAM-binding methyltransferase superfamily. MenG/UbiE family.

It carries out the reaction a 2-demethylmenaquinol + S-adenosyl-L-methionine = a menaquinol + S-adenosyl-L-homocysteine + H(+). It participates in quinol/quinone metabolism; menaquinone biosynthesis; menaquinol from 1,4-dihydroxy-2-naphthoate: step 2/2. Its function is as follows. Methyltransferase required for the conversion of demethylmenaquinol (DMKH2) to menaquinol (MKH2). The polypeptide is Demethylmenaquinone methyltransferase (Bacillus cereus (strain B4264)).